Consider the following 810-residue polypeptide: Volume-regulated anion channel subunit LRRC8A (810 aa).

M1 is modified (N-acetylmethionine). Residues 1 to 23 lie on the Cytoplasmic side of the membrane; the sequence is MIPVTELRYFADTQPAYRILKPW. The helical transmembrane segment at 24-47 threads the bilayer; it reads WDVFTDYISIVMLMIAVFGGTLQV. The Extracellular segment spans residues 48–123; the sequence is TQDKMICLPC…YENRLHWFAK (76 aa). 3 disulfides stabilise this stretch: C54–C310, C57–C65, and C113–C295. N-linked (GlcNAc...) asparagine glycans are attached at residues N66 and N83. A helical membrane pass occupies residues 124–142; that stretch reads YFPYLVLLHTLIFLACSNF. At 143-264 the chain is on the cytoplasmic side; the sequence is WFKFPRTSSK…EEGDIVYRLY (122 aa). T200 carries the phosphothreonine modification. The residue at position 202 (S202) is a Phosphoserine. The residue at position 215 (T215) is a Phosphothreonine. S217 carries the post-translational modification Phosphoserine. Residues 265–286 form a helical membrane-spanning segment; the sequence is MRQTIIKVIKFILIICYTVYYV. Residues 287–316 are Extracellular-facing; the sequence is HNIKFDVDCTVDIESLTGYRTYRCAHPLAT. Residues 317–341 traverse the membrane as a helical segment; that stretch reads LFKILASFYISLVIFYGLICMYTLW. The Cytoplasmic portion of the chain corresponds to 342–810; sequence WMLRRSLKKY…RLWRADKEQA (469 aa). 17 LRR repeats span residues 399–422, 423–445, 447–468, 469–492, 493–515, 518–542, 543–565, 567–589, 590–613, 615–637, 639–661, 662–684, 686–707, 708–730, 732–753, 754–776, and 778–801; these read ENKLRQLNLNNEWTLDKLRQRLTK, NAQDKLELHLFMLSGIPDTVFDL, ELEVLKLELIPDVTIPPSIAQL, TGLKELWLYHTAAKIEAPALAFLR, ENLRALHIKFTDIKEIPLWIYSL, LEELHLTGNLSAENNRYIVIDGLRE, LKRLKVLRLKSNLSKLPQVVTDV, VHLQKLSINNEGTKLIVLNSLKK, MANLTELELIRCDLERIPHSIFSL, NLQEIDLKDNNLKTIEEIISFQH, HRLTCLKLWYNHIAYIPIQIGNL, TNLERLYLNRNKIEKIPTQLFYC, KLRYLDLSHNNLTFLPADIGLL, QNLQNLAITANRIETLPPELFQC, KLRALHLGNNVLQSLPSRVGEL, TNLTQIELRGNRLECLPVELGEC, and LLKRSGLVVEEDLFNTLPPEVKER. Positions 706–707 match the Di-leucine motif motif; the sequence is LL.

This sequence belongs to the LRRC8 family. Heterohexamer; oligomerizes with other LRRC8 proteins (LRRC8B, LRRC8C, LRRC8D and/or LRRC8E) to form a heterohexamer. Can form homohexamers in vitro, but these have lower conductance than heterohexamers. In vivo, the subunit composition may depend primarily on expression levels, and heterooligomeric channels containing various proportions of the different LRRC8 proteins may coexist. Interact with GRB2. Interacts with NOX4; this interaction prevents the ubiquitin-mediated degradation of LRRC8A. Post-translationally, N-glycosylated. Expressed in brain, kidney, ovary, lung, liver, heart, and fetal brain and liver. Found at high levels in bone marrow; lower levels are detected in peripheral blood cells. Expressed on T-cells as well as on B-lineage cells.

The protein localises to the cell membrane. Its subcellular location is the lysosome membrane. The catalysed reaction is chloride(in) = chloride(out). The enzyme catalyses iodide(out) = iodide(in). It carries out the reaction taurine(out) = taurine(in). It catalyses the reaction L-aspartate(out) = L-aspartate(in). The catalysed reaction is L-glutamate(out) = L-glutamate(in). The enzyme catalyses myo-inositol(out) = myo-inositol(in). It carries out the reaction 2',3'-cGAMP(out) = 2',3'-cGAMP(in). Its activity is regulated as follows. Inhibited by (4-[(2-butyl-6,7-dichloro-2-cyclopentyl-2,3-dihydro-1-oxo-1H-inden-5-yl)oxy]butanoic acid), which plugs the channel like a cork in a bottle by binding in the extracellular selectivity filter and sterically occluding ion conduction. Lipids may block conduction in closed heterohexameric channels. Essential component of the volume-regulated anion channel (VRAC, also named VSOAC channel), an anion channel required to maintain a constant cell volume in response to extracellular or intracellular osmotic changes. The VRAC channel conducts iodide better than chloride and can also conduct organic osmolytes like taurine. Mediates efflux of amino acids, such as aspartate and glutamate, in response to osmotic stress. LRRC8A and LRRC8D are required for the uptake of the drug cisplatin. In complex with LRRC8C or LRRC8E, acts as a transporter of immunoreactive cyclic dinucleotide GMP-AMP (2'-3'-cGAMP), an immune messenger produced in response to DNA virus in the cytosol: mediates both import and export of 2'-3'-cGAMP, thereby promoting transfer of 2'-3'-cGAMP to bystander cells. In contrast, complexes containing LRRC8D inhibit transport of 2'-3'-cGAMP. Required for in vivo channel activity, together with at least one other family member (LRRC8B, LRRC8C, LRRC8D or LRRC8E); channel characteristics depend on the precise subunit composition. Can form functional channels by itself (in vitro). Involved in B-cell development: required for the pro-B cell to pre-B cell transition. Also required for T-cell development. Required for myoblast differentiation: VRAC activity promotes membrane hyperpolarization and regulates insulin-stimulated glucose metabolism and oxygen consumption. Also acts as a regulator of glucose-sensing in pancreatic beta cells: VRAC currents, generated in response to hypotonicity- or glucose-induced beta cell swelling, depolarize cells, thereby causing electrical excitation, leading to increase glucose sensitivity and insulin secretion. Also plays a role in lysosome homeostasis by forming functional lysosomal VRAC channels in response to low cytoplasmic ionic strength condition: lysosomal VRAC channels are necessary for the formation of large lysosome-derived vacuoles, which store and then expel excess water to maintain cytosolic water homeostasis. Acts as a key factor in NLRP3 inflammasome activation by modulating itaconate efflux and mitochondria function. This Homo sapiens (Human) protein is Volume-regulated anion channel subunit LRRC8A.